A 499-amino-acid polypeptide reads, in one-letter code: MSSTSLYAAIDLGSNSFHMLVVREVAGSIQTLSRIKRKVRLAAGLNSDNTLSAEAMERGWQCLRLFAERLQDIPPTQIRVVATATLRLAVNAEEFLAKAQEILGTPVQVISGEEEARLIYQGVAHTTGGADQRLVVDIGGASTELVTGTGAQTTSLFSLSMGCVTWLERYFADRSLTKENFDLAEAAAREVLLPIADVLRYHGWKVCVGASGTVQALQEIMMAQGMDERITLAKLQQLKQRAIQCGRLEELEIEGLTLERALVFPSGLAILIAIFSELNIQCMTLAGGALREGLVYGMLHLSVEQDIRSRTLRNIQRRFMIDTEQAQRVASLASHLLSQLDGSWELDPLSRDLLLSACSLHEIGLSVDFKRAPQHAAYLVNNLDLPGFTPAQKKLIATLLLNQTNAIDLSSLHQQNAVPPRVAEHLCRLLRLAILFASRRRDDLLPAIQLAAHDDQLTLTLPENWLAEHPLGREMVDQECQWQSYVHWTLRVTSGDTPR.

This sequence belongs to the GppA/Ppx family. GppA subfamily.

It catalyses the reaction guanosine 3'-diphosphate 5'-triphosphate + H2O = guanosine 3',5'-bis(diphosphate) + phosphate + H(+). It functions in the pathway purine metabolism; ppGpp biosynthesis; ppGpp from GTP: step 2/2. Functionally, catalyzes the conversion of pppGpp to ppGpp. Guanosine pentaphosphate (pppGpp) is a cytoplasmic signaling molecule which together with ppGpp controls the 'stringent response', an adaptive process that allows bacteria to respond to amino acid starvation, resulting in the coordinated regulation of numerous cellular activities. The protein is Guanosine-5'-triphosphate,3'-diphosphate pyrophosphatase of Klebsiella pneumoniae (strain 342).